The primary structure comprises 66 residues: Large ribosomal subunit protein uL29 (66 aa).

The protein belongs to the universal ribosomal protein uL29 family.

This chain is Large ribosomal subunit protein uL29, found in Borrelia duttonii (strain Ly).